The sequence spans 402 residues: Phosphoglycerate kinase (402 aa).

Residues 30–32 (DFN), Arg-46, 70–73 (HLGR), Arg-126, and Arg-159 contribute to the substrate site. ATP-binding positions include Lys-210, Glu-332, and 358–361 (GGDT).

This sequence belongs to the phosphoglycerate kinase family. In terms of assembly, monomer.

It localises to the cytoplasm. It catalyses the reaction (2R)-3-phosphoglycerate + ATP = (2R)-3-phospho-glyceroyl phosphate + ADP. It functions in the pathway carbohydrate degradation; glycolysis; pyruvate from D-glyceraldehyde 3-phosphate: step 2/5. The chain is Phosphoglycerate kinase from Helicobacter hepaticus (strain ATCC 51449 / 3B1).